Reading from the N-terminus, the 440-residue chain is Proline--tRNA ligase (440 aa).

The protein belongs to the class-II aminoacyl-tRNA synthetase family. ProS type 2 subfamily. Homodimer.

The protein localises to the cytoplasm. The enzyme catalyses tRNA(Pro) + L-proline + ATP = L-prolyl-tRNA(Pro) + AMP + diphosphate. Functionally, catalyzes the attachment of proline to tRNA(Pro) in a two-step reaction: proline is first activated by ATP to form Pro-AMP and then transferred to the acceptor end of tRNA(Pro). The sequence is that of Proline--tRNA ligase from Xanthobacter autotrophicus (strain ATCC BAA-1158 / Py2).